The primary structure comprises 161 residues: MKKLAIIGATSVMMMTGTAQANFTSSGTNGKVDLTITEECRVTVESKSESFLRSGLVANRHITNLGIQSTGCGTGQRVALKLGAGSYDDTNGAHMTHENGTDKLLVSMGSATGDGTQDGGVYYINRDGNWNGQMVFIVRNDQQHLPTGKYTLNLEGGFWTK.

A signal peptide spans 1–21 (MKKLAIIGATSVMMMTGTAQA).

This sequence belongs to the Dr-adhesin family.

The protein localises to the fimbrium. Functionally, hemagglutinins of uropathogenic E.coli mediate adherence to the upper urinary tract. These adhesins bind to the Dr blood group antigen and also agglutinate human erythrocytes in the presence of D-mannose (mannose-resistant hemagglutination (MRHA)). The polypeptide is Afimbrial adhesin AFA-I (afaE1) (Escherichia coli).